Here is a 416-residue protein sequence, read N- to C-terminus: ASTRA-associated protein 1 (416 aa).

4 WD repeats span residues 13–54 (KHET…PFAG), 58–95 (ETKA…AVAI), 111–147 (VYEV…SESI), and 234–273 (HYPE…VNVS).

The protein belongs to the WD repeat ASA1 family. In terms of assembly, component of the ASTRA chromatin remodeling machinery complex.

It localises to the nucleus. Its function is as follows. Component of the ASTRA complex involved in chromatin remodeling. The protein is ASTRA-associated protein 1 (ASA1) of Lachancea thermotolerans (strain ATCC 56472 / CBS 6340 / NRRL Y-8284) (Yeast).